The primary structure comprises 422 residues: Cytochrome P-450 monooxygenase DoxA (422 aa).

Heme is bound at residue cysteine 369.

Belongs to the cytochrome P450 family. Monomer. It depends on heme as a cofactor.

The protein localises to the cytoplasm. The catalysed reaction is 13-deoxydaunorubicin + NADPH + O2 + H(+) = 13-dihydrodaunorubicin + NADP(+) + H2O. The enzyme catalyses 13-dihydrodaunorubicin + NADPH + O2 + H(+) = daunorubicin + NADP(+) + 2 H2O. It carries out the reaction 13-deoxycarminomycin + NADPH + O2 + H(+) = 13-dihydrocarminomycin + NADP(+) + H2O. It catalyses the reaction 13-dihydrocarminomycin + NADPH + O2 + H(+) = carminomycin + NADP(+) + 2 H2O. The protein operates within antibiotic biosynthesis; daunorubicin biosynthesis. Its pathway is antibiotic biosynthesis; carminomycin biosynthesis. Strongly inhibited by dithiothreitol and high ionic strength buffers. Involved in the biosynthesis of the anthracyclines carminomycin and daunorubicin (daunomycin) which are aromatic polyketide antibiotics that exhibit high cytotoxicity and are widely applied in the chemotherapy of a variety of cancers. In vivo, DoxA catalyzes the C-13 hydroxylation of 13-deoxycarminomycin and 13-deoxydaunorubicin to yield 13-dihydrocarminomycin and 13-dihydrodaunorubicin, respectively, as well as the oxidation of these 13-dihydro-anthracyclines to their respective 13-keto forms, carminomycin and daunorubicin. In vitro, it also catalyzes the C-14 hydroxylation of daunorubicin to form doxorubicin (adriamycin), although this strain is not a doxorubicin producer. It is not able to accept anthracyclinones (aglycones) and anthracyclines with a 10-carbomethoxyl moiety. 13-oxidation of the anthracyclines possessing the 4-methoxy substitution is greatly favored. The anthracycline analog desacetyladriamycin can be oxidized to 10-hydroxydesacetyladriamycin. It can only use NADP. DoxA acts jointly with DauV. This Streptomyces sp. (strain C5) protein is Cytochrome P-450 monooxygenase DoxA (doxA).